The sequence spans 197 residues: uncharacterized protein (197 aa).

Belongs to the NAD(P)H dehydrogenase (quinone) family.

This is an uncharacterized protein from Bacillus subtilis (strain 168).